The following is a 253-amino-acid chain: Chitooligosaccharide deacetylase (253 aa).

Positions 61 and 125 each coordinate Mg(2+).

This sequence belongs to the YdjC deacetylase family. ChbG subfamily. Homodimer. Mg(2+) is required as a cofactor.

The protein localises to the cytoplasm. The catalysed reaction is N,N'-diacetylchitobiose + H2O = N-acetyl-beta-D-glucosaminyl-(1-&gt;4)-D-glucosamine + acetate. It catalyses the reaction diacetylchitobiose-6'-phosphate + H2O = N'-monoacetylchitobiose-6'-phosphate + acetate. It functions in the pathway glycan degradation; chitin degradation. Its function is as follows. Involved in the degradation of chitin. ChbG is essential for growth on the acetylated chitooligosaccharides chitobiose and chitotriose but is dispensable for growth on cellobiose and chitosan dimer, the deacetylated form of chitobiose. Deacetylation of chitobiose-6-P and chitotriose-6-P is necessary for both the activation of the chb promoter by the regulatory protein ChbR and the hydrolysis of phosphorylated beta-glucosides by the phospho-beta-glucosidase ChbF. Catalyzes the removal of only one acetyl group from chitobiose-6-P to yield monoacetylchitobiose-6-P, the inducer of ChbR and the substrate of ChbF. This Proteus mirabilis (strain HI4320) protein is Chitooligosaccharide deacetylase.